Reading from the N-terminus, the 238-residue chain is Orotidine 5'-phosphate decarboxylase (238 aa).

Substrate contacts are provided by residues D13, K35, 62 to 71 (DLKFHDIPNT), T121, R182, Q191, G211, and R212. The active-site Proton donor is the K64.

The protein belongs to the OMP decarboxylase family. Type 1 subfamily. In terms of assembly, homodimer.

It carries out the reaction orotidine 5'-phosphate + H(+) = UMP + CO2. It participates in pyrimidine metabolism; UMP biosynthesis via de novo pathway; UMP from orotate: step 2/2. Catalyzes the decarboxylation of orotidine 5'-monophosphate (OMP) to uridine 5'-monophosphate (UMP). This is Orotidine 5'-phosphate decarboxylase from Saccharophagus degradans (strain 2-40 / ATCC 43961 / DSM 17024).